The primary structure comprises 375 residues: Actin, cytoplasmic (375 aa).

Belongs to the actin family.

The protein localises to the cytoplasm. It localises to the cytoskeleton. It carries out the reaction ATP + H2O = ADP + phosphate + H(+). Functionally, actins are highly conserved proteins that are involved in various types of cell motility and are ubiquitously expressed in all eukaryotic cells. The protein is Actin, cytoplasmic of Oxytricha trifallax (Sterkiella histriomuscorum).